The following is a 215-amino-acid chain: Phosphatidylserine decarboxylase proenzyme (215 aa).

The Schiff-base intermediate with substrate; via pyruvic acid role is filled by serine 184. Serine 184 bears the Pyruvic acid (Ser); by autocatalysis mark.

It belongs to the phosphatidylserine decarboxylase family. PSD-A subfamily. Heterodimer of a large membrane-associated beta subunit and a small pyruvoyl-containing alpha subunit. Pyruvate serves as cofactor. Is synthesized initially as an inactive proenzyme. Formation of the active enzyme involves a self-maturation process in which the active site pyruvoyl group is generated from an internal serine residue via an autocatalytic post-translational modification. Two non-identical subunits are generated from the proenzyme in this reaction, and the pyruvate is formed at the N-terminus of the alpha chain, which is derived from the carboxyl end of the proenzyme. The post-translation cleavage follows an unusual pathway, termed non-hydrolytic serinolysis, in which the side chain hydroxyl group of the serine supplies its oxygen atom to form the C-terminus of the beta chain, while the remainder of the serine residue undergoes an oxidative deamination to produce ammonia and the pyruvoyl prosthetic group on the alpha chain.

Its subcellular location is the cell membrane. It carries out the reaction a 1,2-diacyl-sn-glycero-3-phospho-L-serine + H(+) = a 1,2-diacyl-sn-glycero-3-phosphoethanolamine + CO2. It functions in the pathway phospholipid metabolism; phosphatidylethanolamine biosynthesis; phosphatidylethanolamine from CDP-diacylglycerol: step 2/2. Catalyzes the formation of phosphatidylethanolamine (PtdEtn) from phosphatidylserine (PtdSer). The sequence is that of Phosphatidylserine decarboxylase proenzyme from Ralstonia pickettii (strain 12J).